The primary structure comprises 100 residues: Small ribosomal subunit protein uS14 (100 aa).

Belongs to the universal ribosomal protein uS14 family. In terms of assembly, part of the 30S ribosomal subunit. Contacts proteins S3 and S10.

Binds 16S rRNA, required for the assembly of 30S particles and may also be responsible for determining the conformation of the 16S rRNA at the A site. The polypeptide is Small ribosomal subunit protein uS14 (Parasynechococcus marenigrum (strain WH8102)).